The primary structure comprises 486 residues: Cardiolipin synthase A (486 aa).

2 helical membrane passes run T3 to V23 and M38 to F58. 2 PLD phosphodiesterase domains span residues M219–R246 and E399–S426. Residues H224, K226, D231, H404, K406, and D411 contribute to the active site.

Belongs to the phospholipase D family. Cardiolipin synthase subfamily. ClsA sub-subfamily.

Its subcellular location is the cell inner membrane. The enzyme catalyses 2 a 1,2-diacyl-sn-glycero-3-phospho-(1'-sn-glycerol) = a cardiolipin + glycerol. Its function is as follows. Catalyzes the reversible phosphatidyl group transfer from one phosphatidylglycerol molecule to another to form cardiolipin (CL) (diphosphatidylglycerol) and glycerol. The chain is Cardiolipin synthase A from Yersinia pseudotuberculosis serotype O:3 (strain YPIII).